Consider the following 92-residue polypeptide: MRRILSYKDEDIDAHMVMRRSLLVTNLGKGALVGHRVQQSQVYRMSRAYALPKVAAITSNGVVSVNYDGSVSWYEGDGATLKATEFIRTEDF.

This is an uncharacterized protein from Treponema pallidum (strain Nichols).